We begin with the raw amino-acid sequence, 189 residues long: Peptidyl-tRNA hydrolase (189 aa).

Residue Tyr15 participates in tRNA binding. The active-site Proton acceptor is His20. Residues Phe66, Asn68, and Asn114 each coordinate tRNA.

Belongs to the PTH family. Monomer.

It localises to the cytoplasm. The catalysed reaction is an N-acyl-L-alpha-aminoacyl-tRNA + H2O = an N-acyl-L-amino acid + a tRNA + H(+). Its function is as follows. Hydrolyzes ribosome-free peptidyl-tRNAs (with 1 or more amino acids incorporated), which drop off the ribosome during protein synthesis, or as a result of ribosome stalling. Functionally, catalyzes the release of premature peptidyl moieties from peptidyl-tRNA molecules trapped in stalled 50S ribosomal subunits, and thus maintains levels of free tRNAs and 50S ribosomes. The polypeptide is Peptidyl-tRNA hydrolase (Streptococcus pneumoniae serotype 2 (strain D39 / NCTC 7466)).